A 392-amino-acid chain; its full sequence is Multidrug resistance protein MdtL (392 aa).

12 helical membrane passes run 4 to 24 (FLLCSFALVLLYPSGIDMYLV), 38 to 58 (AQLHIAFSVYLAGMASAMLFA), 70 to 90 (VAIVGAVIFVVASLLCAQAHA), 95 to 115 (LVGRFIQGIGAGSCYVVAFAI), 131 to 151 (LLNGITCIIPVLAPVLGHLIM), 158 to 178 (SLFYTMTGMGVMVGLLSVFIL), 209 to 229 (ILITTLSVTAILTYVNVSPVL), 246 to 266 (ALMAMISMAVSFSTPFALSLF), 270 to 290 (TLMLTSQVLFLAAGLALSLAT), 294 to 314 (LTLIGLGMICAGFSVGFGVAM), 331 to 351 (VLGIAQVCGSSLWIWLAAIIG), and 357 to 377 (MLIGILIACSIVSLVLLLVVT).

It belongs to the major facilitator superfamily. DHA1 family. MdtL (TC 2.A.1.2.22) subfamily.

It localises to the cell inner membrane. This Klebsiella pneumoniae (strain 342) protein is Multidrug resistance protein MdtL.